A 295-amino-acid polypeptide reads, in one-letter code: MIVVASPAVVREIMRRHGISPRKSLGQNFLIDLNIIDKIIKAADLTPADLVVEIGPGLGALTARAAARAGKVLAVEVDRGLLPALAEVLEGAGNVEIIRGDALDVDFDRLAGEKTDGAFGRGGKKYKLLANLPYYLTGPLLLRLLLERFNFALMVVMVQLEVAFRLTASPGTADYGALSVAVQYFTEPKVLFRVPRTVFYPPPGVDSAVVRLALRPAPAVTVRNEDVFFQVVRAAFGFRRKTLLNSLAASGLGPGREAWLEVLKRAGIDPQRRGETLSLSEFASIADSFLDAGGQ.

S-adenosyl-L-methionine-binding residues include Asn28, Leu30, Gly55, Glu76, Asp101, and Asn131.

The protein belongs to the class I-like SAM-binding methyltransferase superfamily. rRNA adenine N(6)-methyltransferase family. RsmA subfamily.

It localises to the cytoplasm. The catalysed reaction is adenosine(1518)/adenosine(1519) in 16S rRNA + 4 S-adenosyl-L-methionine = N(6)-dimethyladenosine(1518)/N(6)-dimethyladenosine(1519) in 16S rRNA + 4 S-adenosyl-L-homocysteine + 4 H(+). Specifically dimethylates two adjacent adenosines (A1518 and A1519) in the loop of a conserved hairpin near the 3'-end of 16S rRNA in the 30S particle. May play a critical role in biogenesis of 30S subunits. In Pelotomaculum thermopropionicum (strain DSM 13744 / JCM 10971 / SI), this protein is Ribosomal RNA small subunit methyltransferase A.